Reading from the N-terminus, the 199-residue chain is dTTP/UTP pyrophosphatase (199 aa).

The Proton acceptor role is filled by aspartate 78.

It belongs to the Maf family. YhdE subfamily. A divalent metal cation is required as a cofactor.

The protein localises to the cytoplasm. The enzyme catalyses dTTP + H2O = dTMP + diphosphate + H(+). It catalyses the reaction UTP + H2O = UMP + diphosphate + H(+). Functionally, nucleoside triphosphate pyrophosphatase that hydrolyzes dTTP and UTP. May have a dual role in cell division arrest and in preventing the incorporation of modified nucleotides into cellular nucleic acids. The polypeptide is dTTP/UTP pyrophosphatase (Clostridium acetobutylicum (strain ATCC 824 / DSM 792 / JCM 1419 / IAM 19013 / LMG 5710 / NBRC 13948 / NRRL B-527 / VKM B-1787 / 2291 / W)).